The following is a 607-amino-acid chain: Elongation factor 4 (607 aa).

The region spanning 11 to 193 (SKIRNFSIIA…QIVEKVPAPT (183 aa)) is the tr-type G domain. GTP-binding positions include 23 to 28 (DHGKST) and 140 to 143 (NKID).

It belongs to the TRAFAC class translation factor GTPase superfamily. Classic translation factor GTPase family. LepA subfamily.

It is found in the cell membrane. It carries out the reaction GTP + H2O = GDP + phosphate + H(+). In terms of biological role, required for accurate and efficient protein synthesis under certain stress conditions. May act as a fidelity factor of the translation reaction, by catalyzing a one-codon backward translocation of tRNAs on improperly translocated ribosomes. Back-translocation proceeds from a post-translocation (POST) complex to a pre-translocation (PRE) complex, thus giving elongation factor G a second chance to translocate the tRNAs correctly. Binds to ribosomes in a GTP-dependent manner. The sequence is that of Elongation factor 4 from Bacillus cereus (strain ATCC 10987 / NRS 248).